A 1284-amino-acid chain; its full sequence is Neuronal cell adhesion molecule (1284 aa).

The signal sequence occupies residues 1–24 (MMKEKSISASKASLVFFLCQMISA). The Extracellular portion of the chain corresponds to 25 to 1143 (LDVPLDSKLL…ASRQVDIATQ (1119 aa)). Ig-like C2-type domains are found at residues 41–129 (PTIT…AAIS), 136–230 (PSRS…QPIS), 243–332 (PPVL…ISVT), 337–424 (PYWI…AFVN), 430–517 (PRIL…VQLE), and 521–608 (PTMI…AVLT). 2 disulfides stabilise this stretch: cysteine 63–cysteine 118 and cysteine 162–cysteine 213. Asparagine 78 carries N-linked (GlcNAc...) asparagine glycosylation. 2 N-linked (GlcNAc...) asparagine glycosylation sites follow: asparagine 218 and asparagine 290. Disulfide bonds link cysteine 268/cysteine 316 and cysteine 358/cysteine 408. 6 N-linked (GlcNAc...) asparagine glycosylation sites follow: asparagine 409, asparagine 483, asparagine 576, asparagine 581, asparagine 595, and asparagine 692. 2 cysteine pairs are disulfide-bonded: cysteine 452-cysteine 501 and cysteine 543-cysteine 592. 5 Fibronectin type-III domains span residues 625-720 (PPLD…TKSA), 725-819 (NPSN…SGED), 824-926 (APGN…TPEG), 930-1026 (PPSF…IMDE), and 1040-1132 (QPLY…TGPA). The segment covering 707–731 (QPSEPSEQYLTKSANPDENPSNVQG) has biased composition (polar residues). Residues 707–732 (QPSEPSEQYLTKSANPDENPSNVQGI) are disordered. 9 N-linked (GlcNAc...) asparagine glycosylation sites follow: asparagine 778, asparagine 834, asparagine 885, asparagine 969, asparagine 985, asparagine 995, asparagine 1048, asparagine 1059, and asparagine 1091. Residues 1144–1166 (GWFIGLMCAVALLILILLIVCFI) form a helical membrane-spanning segment. The Cytoplasmic portion of the chain corresponds to 1167–1284 (RRNKGGKYPV…SPVNAMNSFV (118 aa)). Composition is skewed to basic and acidic residues over residues 1175-1195 (PVKE…KEDD), 1202-1212 (RSLESDAEDHK), and 1221-1230 (PSDRTVKKED). A disordered region spans residues 1175–1284 (PVKEKEDAHA…SPVNAMNSFV (110 aa)). Over residues 1268–1284 (NESSEAPSPVNAMNSFV) the composition is skewed to polar residues.

It belongs to the immunoglobulin superfamily. L1/neurofascin/NgCAM family. In terms of assembly, heterodimer of an alpha and a beta chain. In terms of tissue distribution, retina and developing brain.

It is found in the cell membrane. Its function is as follows. This protein is a cell adhesion molecule involved in neuron-neuron adhesion, neurite fasciculation, outgrowth of neurites, etc. Specifically involved in the development of optic fibres in the retina. The polypeptide is Neuronal cell adhesion molecule (Gallus gallus (Chicken)).